Consider the following 631-residue polypeptide: Glutamyl-tRNA(Gln) amidotransferase subunit E (631 aa).

Belongs to the GatB/GatE family. GatE subfamily. As to quaternary structure, heterodimer of GatD and GatE.

The enzyme catalyses L-glutamyl-tRNA(Gln) + L-glutamine + ATP + H2O = L-glutaminyl-tRNA(Gln) + L-glutamate + ADP + phosphate + H(+). Allows the formation of correctly charged Gln-tRNA(Gln) through the transamidation of misacylated Glu-tRNA(Gln) in organisms which lack glutaminyl-tRNA synthetase. The reaction takes place in the presence of glutamine and ATP through an activated gamma-phospho-Glu-tRNA(Gln). The GatDE system is specific for glutamate and does not act on aspartate. This Methanococcus maripaludis (strain C5 / ATCC BAA-1333) protein is Glutamyl-tRNA(Gln) amidotransferase subunit E.